An 80-amino-acid chain; its full sequence is Keratin-associated protein 6-1 (80 aa).

It belongs to the KRTAP type 6 family. Interacts with hair keratins.

In terms of biological role, in the hair cortex, hair keratin intermediate filaments are embedded in an interfilamentous matrix, consisting of hair keratin-associated proteins (KRTAP), which are essential for the formation of a rigid and resistant hair shaft through their extensive disulfide bond cross-linking with abundant cysteine residues of hair keratins. The matrix proteins include the high-sulfur and high-glycine-tyrosine keratins. The polypeptide is Keratin-associated protein 6-1 (KRTAP6-1) (Oryctolagus cuniculus (Rabbit)).